The sequence spans 691 residues: DNA ligase (691 aa).

Residues 41-45 (DAEYD), 90-91 (SL), and E130 each bind NAD(+). The active-site N6-AMP-lysine intermediate is the K132. 4 residues coordinate NAD(+): R153, E190, K307, and K331. Positions 425, 428, 443, and 449 each coordinate Zn(2+). The 82-residue stretch at 610–691 (APQGVLAGKT…LHQLLEGNTP (82 aa)) folds into the BRCT domain.

The protein belongs to the NAD-dependent DNA ligase family. LigA subfamily. Mg(2+) is required as a cofactor. It depends on Mn(2+) as a cofactor.

The catalysed reaction is NAD(+) + (deoxyribonucleotide)n-3'-hydroxyl + 5'-phospho-(deoxyribonucleotide)m = (deoxyribonucleotide)n+m + AMP + beta-nicotinamide D-nucleotide.. In terms of biological role, DNA ligase that catalyzes the formation of phosphodiester linkages between 5'-phosphoryl and 3'-hydroxyl groups in double-stranded DNA using NAD as a coenzyme and as the energy source for the reaction. It is essential for DNA replication and repair of damaged DNA. The polypeptide is DNA ligase (Burkholderia ambifaria (strain ATCC BAA-244 / DSM 16087 / CCUG 44356 / LMG 19182 / AMMD) (Burkholderia cepacia (strain AMMD))).